The primary structure comprises 2146 residues: Phospholipid-transporting ATPase ABCA7 (2146 aa).

A helical transmembrane segment spans residues 22 to 42 (PVQLLVELLWPLFLFFILVAV). Over 43 to 549 (RHSHPPLEHH…DVFLRVLSRS (507 aa)) the chain is Extracellular. A disulfide bridge links Cys-75 with Cys-225. A glycan (N-linked (GlcNAc...) asparagine) is linked at Asn-312. A run of 6 helical transmembrane segments spans residues 550–570 (LPLF…KAVV), 593–613 (LGWF…LVLV), 626–646 (GVVF…SFLL), 655–675 (LAAA…VLCV), 687–707 (VAAS…LALL), and 727–747 (VFSL…YGLA). An ABC transporter 1 domain is found at 807-1038 (VSVRSLEKRF…LGSGYYLTLV (232 aa)). ATP is bound at residue 841–848 (GHNGAGKT). Residues 849–869 (TTLSILSGLFPPSGGSAFILG) traverse the membrane as a helical segment. The span at 1048–1066 (EKADTDMEGSVDTRQEKKN) shows a compositional bias: basic and acidic residues. 2 disordered regions span residues 1048–1072 (EKAD…QGSR) and 1185–1209 (TALE…DAVG). Residues 1243-1263 (IVLPALFVGLALVFSLIVPPF) traverse the membrane as a helical segment. Over 1264–1537 (GHYPALRLSP…ALMASSVDVL (274 aa)) the chain is Extracellular. Cys-1345 and Cys-1359 form a disulfide bridge. The next 6 membrane-spanning stretches (helical) occupy residues 1538–1558 (VSIC…LVLI), 1584–1604 (FLWD…IFLA), 1621–1641 (LLLL…SFFF), 1649–1669 (VVLT…TFVL), 1683–1703 (ILKQ…LIDM), and 1729–1749 (VVGK…LFTL). One can recognise an ABC transporter 2 domain in the interval 1793-2025 (LVLRNLTKVY…FAAGHTLTLR (233 aa)). 1827–1834 (GVNGAGKT) lines the ATP pocket. Positions 2104–2146 (QGKDEDTEEQKEAGVGVDPAPGLQHPKRVSQFLDDPSTAETVL) are disordered.

The protein belongs to the ABC transporter superfamily. ABCA family. Post-translationally, N-glycosylated. Expressed in leukocytes (at protein level). Widely expressed. Highly expressed in myelo-lymphatic tissues including peripheral leukocytes, thymus, spleen and bone marrow. Expressed in the hippocampus and the cerebellum. Isoform 2: Abundant in lymph node, spleen, thymus and trachea. Isoform 1: Strongly expressed in brain and bone marrow.

The protein localises to the cell membrane. It is found in the golgi apparatus membrane. It localises to the early endosome membrane. Its subcellular location is the cytoplasm. The protein resides in the cell projection. The protein localises to the ruffle membrane. It is found in the phagocytic cup. It localises to the endoplasmic reticulum. It catalyses the reaction ATP + H2O + phospholipidSide 1 = ADP + phosphate + phospholipidSide 2.. The enzyme catalyses a 1,2-diacyl-sn-glycero-3-phosphocholine(out) + ATP + H2O = a 1,2-diacyl-sn-glycero-3-phosphocholine(in) + ADP + phosphate + H(+). It carries out the reaction a 1,2-diacyl-sn-glycero-3-phospho-L-serine(out) + ATP + H2O = a 1,2-diacyl-sn-glycero-3-phospho-L-serine(in) + ADP + phosphate + H(+). ATPase activity is decreased by cholesterol and ceramide. ATPase activity is stimulated by phosphatidylserine, phosphatidylcholine and sphingomyelin, but phosphatidylserine is more effective. In terms of biological role, catalyzes the translocation of specific phospholipids from the cytoplasmic to the extracellular/lumenal leaflet of membrane coupled to the hydrolysis of ATP. Transports preferentially phosphatidylserine over phosphatidylcholine. Plays a role in lipid homeostasis and macrophage-mediated phagocytosis. Binds APOA1 and may function in apolipoprotein-mediated phospholipid efflux from cells. May also mediate cholesterol efflux. May regulate cellular ceramide homeostasis during keratinocyte differentiation. Involved in lipid raft organization and CD1D localization on thymocytes and antigen-presenting cells, which plays an important role in natural killer T-cell development and activation. Plays a role in phagocytosis of apoptotic cells by macrophages. Macrophage phagocytosis is stimulated by APOA1 or APOA2, probably by stabilization of ABCA7. Also involved in phagocytic clearance of amyloid-beta by microglia cells and macrophages. Further limits amyloid-beta production by playing a role in the regulation of amyloid-beta A4 precursor protein (APP) endocytosis and/or processing. Amyloid-beta is the main component of amyloid plaques found in the brains of Alzheimer patients. The sequence is that of Phospholipid-transporting ATPase ABCA7 from Homo sapiens (Human).